Here is a 119-residue protein sequence, read N- to C-terminus: Small ribosomal subunit protein uS13 (119 aa).

The interval 92–119 (RRGLPVRGQRTKTNARTRKGPRKAIRAR) is disordered.

The protein belongs to the universal ribosomal protein uS13 family. Part of the 30S ribosomal subunit. Forms a loose heterodimer with protein S19. Forms two bridges to the 50S subunit in the 70S ribosome.

In terms of biological role, located at the top of the head of the 30S subunit, it contacts several helices of the 16S rRNA. In the 70S ribosome it contacts the 23S rRNA (bridge B1a) and protein L5 of the 50S subunit (bridge B1b), connecting the 2 subunits; these bridges are implicated in subunit movement. Contacts the tRNAs in the A and P-sites. In Nitrosomonas eutropha (strain DSM 101675 / C91 / Nm57), this protein is Small ribosomal subunit protein uS13.